The chain runs to 276 residues: S-adenosylmethionine decarboxylase proenzyme (276 aa).

Serine 124 functions as the Schiff-base intermediate with substrate; via pyruvic acid in the catalytic mechanism. Serine 124 is modified (pyruvic acid (Ser); by autocatalysis). Catalysis depends on histidine 129, which acts as the Proton acceptor; for processing activity. Catalysis depends on cysteine 152, which acts as the Proton donor; for catalytic activity.

This sequence belongs to the prokaryotic AdoMetDC family. Type 2 subfamily. In terms of assembly, heterooctamer of four alpha and four beta chains arranged as a tetramer of alpha/beta heterodimers. The cofactor is pyruvate. Post-translationally, is synthesized initially as an inactive proenzyme. Formation of the active enzyme involves a self-maturation process in which the active site pyruvoyl group is generated from an internal serine residue via an autocatalytic post-translational modification. Two non-identical subunits are generated from the proenzyme in this reaction, and the pyruvate is formed at the N-terminus of the alpha chain, which is derived from the carboxyl end of the proenzyme. The post-translation cleavage follows an unusual pathway, termed non-hydrolytic serinolysis, in which the side chain hydroxyl group of the serine supplies its oxygen atom to form the C-terminus of the beta chain, while the remainder of the serine residue undergoes an oxidative deamination to produce ammonia and the pyruvoyl group blocking the N-terminus of the alpha chain.

It catalyses the reaction S-adenosyl-L-methionine + H(+) = S-adenosyl 3-(methylsulfanyl)propylamine + CO2. Its pathway is amine and polyamine biosynthesis; S-adenosylmethioninamine biosynthesis; S-adenosylmethioninamine from S-adenosyl-L-methionine: step 1/1. Catalyzes the decarboxylation of S-adenosylmethionine to S-adenosylmethioninamine (dcAdoMet), the propylamine donor required for the synthesis of the polyamines spermine and spermidine from the diamine putrescine. This Desulfitobacterium hafniense (strain DSM 10664 / DCB-2) protein is S-adenosylmethionine decarboxylase proenzyme.